The primary structure comprises 43 residues: Protein PsbN (43 aa).

Residues 5–27 (TVLSIFISSLLLGITGYSIYTAF) traverse the membrane as a helical segment.

It belongs to the PsbN family.

The protein localises to the plastid. The protein resides in the chloroplast thylakoid membrane. In terms of biological role, may play a role in photosystem I and II biogenesis. In Porphyra purpurea (Red seaweed), this protein is Protein PsbN.